Here is a 227-residue protein sequence, read N- to C-terminus: MNSSGDNAGFEWWRRTMQYKTGIGLTPEEKTRYEDDSKARELKKECLKCYEYRDWMLKYSPTVRFMVQAITKLNKGSDSKFDDSKIICDYCPDWKGGGFHPELGILLCQNRLRDKWHLEDTLSHELIHYFDDLKWQIDWLNLKHHACSEIRASSLSGECRFWEEFKRRGFRTGFHVARGHQDCVRRRAIISVSGNPNCQSKEHAAKIVDEVWDSCFADTRPFDEIYR.

His124 provides a ligand contact to a divalent metal cation. Glu125 is a catalytic residue. Position 128 (His128) interacts with a divalent metal cation.

The protein belongs to the peptidase M76 family. As to quaternary structure, interacts with ATP6.

It is found in the mitochondrion inner membrane. In terms of biological role, has a dual role in the assembly of mitochondrial ATPase. Acts as a protease that removes the N-terminal 10 residues of mitochondrial ATPase CF(0) subunit 6 (ATP6) at the intermembrane space side. Also involved in the correct assembly of the membrane-embedded ATPase CF(0) particle, probably mediating association of ATP6 with the subunit 9 ring. This chain is Mitochondrial inner membrane protease ATP23 (ATP23), found in Saccharomyces cerevisiae (strain YJM789) (Baker's yeast).